A 275-amino-acid chain; its full sequence is Phosphonoacetaldehyde hydrolase (275 aa).

The active-site Nucleophile is Asp15. Residues Asp15 and Ala17 each contribute to the Mg(2+) site. Lys56 functions as the Schiff-base intermediate with substrate in the catalytic mechanism. Asp189 is a Mg(2+) binding site.

It belongs to the HAD-like hydrolase superfamily. PhnX family. As to quaternary structure, homodimer. Mg(2+) serves as cofactor.

It catalyses the reaction phosphonoacetaldehyde + H2O = acetaldehyde + phosphate + H(+). Its function is as follows. Involved in phosphonate degradation. This chain is Phosphonoacetaldehyde hydrolase, found in Pseudomonas paraeruginosa (strain DSM 24068 / PA7) (Pseudomonas aeruginosa (strain PA7)).